Here is a 1407-residue protein sequence, read N- to C-terminus: ABC transporter B family member 6 (1407 aa).

Residues 18 to 65 (LTPVSEVSEPPESPSPYLDPGAEHGGTGTAAQADDEEEMEEPEEMEPP) form a disordered region. The span at 50 to 63 (ADDEEEMEEPEEME) shows a compositional bias: acidic residues. The next 4 membrane-spanning stretches (helical) occupy residues 84 to 104 (VLMV…IVYL), 139 to 159 (IVYI…CWIL), 212 to 231 (VGNY…IGFV), and 236 to 258 (IALI…NIFL). An ABC transmembrane type-1 1 domain is found at 86 to 379 (MVFGSVAAAA…AATNFYSFDQ (294 aa)). N-linked (GlcNAc...) asparagine glycosylation is present at Asn291. 2 helical membrane passes run 310-330 (GILI…LAIC) and 351-371 (GEII…NQAA). Residues 412-647 (IEFRNVYFSY…GNLYAELLKC (236 aa)) form the ABC transporter 1 domain. Residue 447–454 (GRNGSGKS) coordinates ATP. Asn449 and Asn663 each carry an N-linked (GlcNAc...) asparagine glycan. Disordered stretches follow at residues 670–696 (AERD…SLQR) and 709–815 (NSEE…DGQH). Asn727 carries N-linked (GlcNAc...) asparagine glycosylation. Basic and acidic residues predominate over residues 733–755 (VGEKEPTIKRQDSFEMRLPELPK). Over residues 761 to 770 (PQRQKSNGSD) the composition is skewed to polar residues. Asn767 carries N-linked (GlcNAc...) asparagine glycosylation. The region spanning 835–1123 (AVLGSIGAAI…PFGLAPYILK (289 aa)) is the ABC transmembrane type-1 2 domain. 6 helical membrane-spanning segments follow: residues 840-860 (IGAA…ALVV), 880-900 (LIIA…HFYF), 958-978 (IFIQ…LLGW), 982-1002 (LVAL…KLWL), 1061-1081 (IGFA…LLLW), and 1102-1122 (MVFS…PYIL). The ABC transporter 2 domain occupies 1158 to 1395 (IELKNIDFCY…NGLYVRLMQP (238 aa)). Asn1178 carries N-linked (GlcNAc...) asparagine glycosylation. 1193–1200 (GVSGSGKS) provides a ligand contact to ATP. Residues Asn1260 and Asn1346 are each glycosylated (N-linked (GlcNAc...) asparagine).

Belongs to the ABC transporter superfamily. ABCB family. Multidrug resistance exporter (TC 3.A.1.201) subfamily. As to expression, expressed in aerial tissues.

The protein resides in the membrane. The enzyme catalyses (indol-3-yl)acetate(in) + ATP + H2O = (indol-3-yl)acetate(out) + ADP + phosphate + H(+). Its function is as follows. Probable auxin efflux transporter that contributes, together with ABCB20 and in a FKBP42/TWD1-dependent manner, to the regulation of leaf position and morphology, internode distribution, roots development, and inflorescence organization, probably by modulating auxin repartition. The polypeptide is ABC transporter B family member 6 (Arabidopsis thaliana (Mouse-ear cress)).